The chain runs to 494 residues: Cobyric acid synthase (494 aa).

Residues 254–453 (KQTVAVIAYP…LHGLFEDPGA (200 aa)) form the GATase cobBQ-type domain. Cys-338 functions as the Nucleophile in the catalytic mechanism. His-445 is an active-site residue.

Belongs to the CobB/CobQ family. CobQ subfamily.

It participates in cofactor biosynthesis; adenosylcobalamin biosynthesis. In terms of biological role, catalyzes amidations at positions B, D, E, and G on adenosylcobyrinic A,C-diamide. NH(2) groups are provided by glutamine, and one molecule of ATP is hydrogenolyzed for each amidation. The polypeptide is Cobyric acid synthase (Albidiferax ferrireducens (strain ATCC BAA-621 / DSM 15236 / T118) (Rhodoferax ferrireducens)).